A 444-amino-acid chain; its full sequence is Chromosomal replication initiator protein DnaA (444 aa).

The segment at 1–66 (MKSEIIESLK…SKTLRELFGK (66 aa)) is domain I, interacts with DnaA modulators. The segment at 66–100 (KPMDFRIEHASAKTEEKLDSNEDEPLVKKRPLILT) is domain II. The domain III, AAA+ region stretch occupies residues 101–317 (PLNPILTFEN…GALVKLIMYQ (217 aa)). Positions 144, 146, 147, and 148 each coordinate ATP. The segment at 318-444 (QISGEKVDLQ…VTGQILDQSV (127 aa)) is domain IV, binds dsDNA.

It belongs to the DnaA family. As to quaternary structure, oligomerizes as a right-handed, spiral filament on DNA at oriC.

The protein localises to the cytoplasm. Functionally, plays an essential role in the initiation and regulation of chromosomal replication. ATP-DnaA binds to the origin of replication (oriC) to initiate formation of the DNA replication initiation complex once per cell cycle. Binds the DnaA box (a 9 base pair repeat at the origin) and separates the double-stranded (ds)DNA. Forms a right-handed helical filament on oriC DNA; dsDNA binds to the exterior of the filament while single-stranded (ss)DNA is stabiized in the filament's interior. The ATP-DnaA-oriC complex binds and stabilizes one strand of the AT-rich DNA unwinding element (DUE), permitting loading of DNA polymerase. After initiation quickly degrades to an ADP-DnaA complex that is not apt for DNA replication. Binds acidic phospholipids. The sequence is that of Chromosomal replication initiator protein DnaA from Pseudothermotoga lettingae (strain ATCC BAA-301 / DSM 14385 / NBRC 107922 / TMO) (Thermotoga lettingae).